A 429-amino-acid polypeptide reads, in one-letter code: UPF0597 protein GSU1527 (429 aa).

Belongs to the UPF0597 family.

This chain is UPF0597 protein GSU1527, found in Geobacter sulfurreducens (strain ATCC 51573 / DSM 12127 / PCA).